The sequence spans 217 residues: MSKLLHIDSSILGSNSVSRQLTAQIVASWRAAHPATEVSYLDLAMDSPSHLSVESLGFRLPAGTADLSEVQQRENAISEALVSQFMAADVLVIGAPLYNFSIPSQLKAWIDRVAQAGRTFKYTEKGPVGLAGGKTIIVASARGGMYSTSDAGNAMEHQESYLKTVFGFFGVTDVRFVRAEGLAMGEAAKAAALAAAQVEILAQTHSAANQPQAVLVA.

Residues S10 and 16–18 (SVS) contribute to the FMN site.

Belongs to the azoreductase type 1 family. As to quaternary structure, homodimer. It depends on FMN as a cofactor.

It carries out the reaction 2 a quinone + NADH + H(+) = 2 a 1,4-benzosemiquinone + NAD(+). It catalyses the reaction N,N-dimethyl-1,4-phenylenediamine + anthranilate + 2 NAD(+) = 2-(4-dimethylaminophenyl)diazenylbenzoate + 2 NADH + 2 H(+). Its function is as follows. Quinone reductase that provides resistance to thiol-specific stress caused by electrophilic quinones. Functionally, also exhibits azoreductase activity. Catalyzes the reductive cleavage of the azo bond in aromatic azo compounds to the corresponding amines. The sequence is that of FMN-dependent NADH:quinone oxidoreductase from Polaromonas naphthalenivorans (strain CJ2).